A 276-amino-acid polypeptide reads, in one-letter code: ATP synthase subunit a 2 (276 aa).

The next 5 helical transmembrane spans lie at 45 to 65 (AVHVDSLGWSIALGALFVWLF), 105 to 125 (VIAPLALTVFCWIFLMNLMDL), 154 to 173 (VNVTLGMSLSVFFLIIYYSI), 226 to 246 (LLFILIALMPFWAQWALSVPW), and 247 to 267 (AIFHILVIVLQAFIFMMLTIV).

It belongs to the ATPase A chain family. In terms of assembly, F-type ATPases have 2 components, CF(1) - the catalytic core - and CF(0) - the membrane proton channel. CF(1) has five subunits: alpha(3), beta(3), gamma(1), delta(1), epsilon(1). CF(0) has three main subunits: a(1), b(2) and c(9-12). The alpha and beta chains form an alternating ring which encloses part of the gamma chain. CF(1) is attached to CF(0) by a central stalk formed by the gamma and epsilon chains, while a peripheral stalk is formed by the delta and b chains.

It is found in the cell inner membrane. Functionally, key component of the proton channel; it plays a direct role in the translocation of protons across the membrane. The protein is ATP synthase subunit a 2 of Hahella chejuensis (strain KCTC 2396).